The sequence spans 508 residues: Maturase K (508 aa).

It belongs to the intron maturase 2 family. MatK subfamily.

Its subcellular location is the plastid. It localises to the chloroplast. Usually encoded in the trnK tRNA gene intron. Probably assists in splicing its own and other chloroplast group II introns. The sequence is that of Maturase K from Marathrum schiedeanum.